We begin with the raw amino-acid sequence, 146 residues long: Hut operon positive regulatory protein (146 aa).

The protein belongs to the HutP family. As to quaternary structure, homohexamer.

In terms of biological role, antiterminator that binds to cis-acting regulatory sequences on the mRNA in the presence of histidine, thereby suppressing transcription termination and activating the hut operon for histidine utilization. The polypeptide is Hut operon positive regulatory protein (Bacillus cereus (strain G9842)).